The chain runs to 295 residues: Myosin light chain kinase A (295 aa).

The region spanning 8-265 (YEFKEELGRG…ATNALNHPWL (258 aa)) is the Protein kinase domain. Residues 14–22 (LGRGAFSIV) and K37 contribute to the ATP site. D130 (proton acceptor) is an active-site residue. T166 and T289 each carry phosphothreonine. The segment at 264 to 295 (WLKSNNSNNTIDTVKMKEYIVERQKTQTKLVN) is autoinhibitory domain.

The protein belongs to the protein kinase superfamily. CAMK Ser/Thr protein kinase family. CaMK subfamily. In terms of processing, autophosphorylated. Transiently phosphorylated on Thr-166 and Thr-289. This phosphorylation is gbpC-dependent.

The catalysed reaction is L-seryl-[myosin light chain] + ATP = O-phospho-L-seryl-[myosin light chain] + ADP + H(+). The enzyme catalyses L-threonyl-[myosin light chain] + ATP = O-phospho-L-threonyl-[myosin light chain] + ADP + H(+). Its activity is regulated as follows. Possesses an autoinhibitory domain. Autophosphorylation appears to increase the enzymatic activity. Activation is gbdC-dependent. Does not have a calmodulin-binding domain. Its function is as follows. Phosphorylates a specific serine in the N-terminus of a myosin light chain. Phosphorylates regulatory myosin light chain (mlcR) during chemotaxis. mlcR phosphorylation increases the motility and actin-activated ATPase activity of myosin, contributing to chemotaxis. The protein is Myosin light chain kinase A (mlkA) of Dictyostelium discoideum (Social amoeba).